A 304-amino-acid polypeptide reads, in one-letter code: 4-diphosphocytidyl-2-C-methyl-D-erythritol kinase (304 aa).

Lys23 is an active-site residue. Residue 111–121 participates in ATP binding; it reads PIGGGLGGGSS. Asp153 is an active-site residue.

Belongs to the GHMP kinase family. IspE subfamily. As to quaternary structure, homodimer.

It carries out the reaction 4-CDP-2-C-methyl-D-erythritol + ATP = 4-CDP-2-C-methyl-D-erythritol 2-phosphate + ADP + H(+). It functions in the pathway isoprenoid biosynthesis; isopentenyl diphosphate biosynthesis via DXP pathway; isopentenyl diphosphate from 1-deoxy-D-xylulose 5-phosphate: step 3/6. In terms of biological role, catalyzes the phosphorylation of the position 2 hydroxy group of 4-diphosphocytidyl-2C-methyl-D-erythritol. This is 4-diphosphocytidyl-2-C-methyl-D-erythritol kinase from Wigglesworthia glossinidia brevipalpis.